The following is a 382-amino-acid chain: Mannitol-1-phosphate 5-dehydrogenase (382 aa).

3 to 14 (ALHFGAGNIGRG) contacts NAD(+). Residue K269 is modified to N6-acetyllysine.

It belongs to the mannitol dehydrogenase family.

It catalyses the reaction D-mannitol 1-phosphate + NAD(+) = beta-D-fructose 6-phosphate + NADH + H(+). This is Mannitol-1-phosphate 5-dehydrogenase from Escherichia coli O9:H4 (strain HS).